Consider the following 344-residue polypeptide: tRNA N6-adenosine threonylcarbamoyltransferase (344 aa).

Residues His-115 and His-119 each contribute to the Fe cation site. Substrate-binding positions include 137–141 (LVSGG), Asp-170, Gly-183, Asp-187, and Asn-276. Fe cation is bound at residue Asp-306.

This sequence belongs to the KAE1 / TsaD family. It depends on Fe(2+) as a cofactor.

Its subcellular location is the cytoplasm. The catalysed reaction is L-threonylcarbamoyladenylate + adenosine(37) in tRNA = N(6)-L-threonylcarbamoyladenosine(37) in tRNA + AMP + H(+). Functionally, required for the formation of a threonylcarbamoyl group on adenosine at position 37 (t(6)A37) in tRNAs that read codons beginning with adenine. Is involved in the transfer of the threonylcarbamoyl moiety of threonylcarbamoyl-AMP (TC-AMP) to the N6 group of A37, together with TsaE and TsaB. TsaD likely plays a direct catalytic role in this reaction. This chain is tRNA N6-adenosine threonylcarbamoyltransferase, found in Limosilactobacillus fermentum (strain NBRC 3956 / LMG 18251) (Lactobacillus fermentum).